The primary structure comprises 282 residues: MNQRIEEVMLANVKRDVARRKRHFATSVVVLSLLAVAWYVCQIEFQKLGAGLPRLWSFVVQMFPPDLSDLDVILKGAGETLAMATIGTIFATIIAFPLALMAARNTCPNKWTYRVSRAILNASRGTETFVYALVFVAAVGFGPFSGVLAITFHMVGAIGKMFAEAIEPVDQGPLDALALTGASRAKIIRYGLIPDVMPHLIASVLYIWEFSVRTSTVLGIVGAGGIGQTLKDTVDLLEFNKMITVLAVVLLMVSAIDFISDRLRYLILDTKREGFETLPANN.

The next 4 membrane-spanning stretches (helical) occupy residues 23 to 43 (HFAT…VCQI), 81 to 101 (LAMA…LALM), 130 to 150 (VYAL…VLAI), and 239 to 259 (FNKM…IDFI). The 184-residue stretch at 77 to 260 (AGETLAMATI…LMVSAIDFIS (184 aa)) folds into the ABC transmembrane type-1 domain.

It belongs to the binding-protein-dependent transport system permease family.

The protein localises to the cell inner membrane. Its function is as follows. Probably forms part of a binding-protein-dependent hypophosphite transporter. This chain is Putative phosphite transport system permease protein HtxC (htxC), found in Stutzerimonas stutzeri (Pseudomonas stutzeri).